We begin with the raw amino-acid sequence, 460 residues long: Hemopexin (460 aa).

The signal sequence occupies residues 1–23 (MARTVVALNILVLLGLCWSLAVA). Asn-38 and Asn-64 each carry an N-linked (GlcNAc...) asparagine glycan. Disulfide bonds link Cys-50/Cys-230, Cys-148/Cys-153, and Cys-187/Cys-199. Hemopexin repeat units lie at residues 53–93 (AWSF…WKNP), 94–138 (VTSV…FPGI), 139–183 (PYPP…SWPA), and 184–230 (VGNC…FISC). Residue His-79 participates in heme binding. His-149 is a heme binding site. Residue Asn-186 is glycosylated (N-linked (GlcNAc...) asparagine). Heme is bound at residue His-235. Asn-240 and Asn-246 each carry an N-linked (GlcNAc...) asparagine glycan. Intrachain disulfides connect Cys-255-Cys-458, Cys-364-Cys-406, and Cys-416-Cys-433. Hemopexin repeat units lie at residues 257–302 (ADPG…WPQG), 303–350 (PSAV…LGSP), 355–394 (LDTI…WAEL), and 398–448 (HEKV…SLPQ). Position 291 (His-291) interacts with heme.

It belongs to the hemopexin family. In terms of tissue distribution, expressed by the liver and secreted in plasma.

The protein resides in the secreted. Functionally, binds heme and transports it to the liver for breakdown and iron recovery, after which the free hemopexin returns to the circulation. The polypeptide is Hemopexin (Hpx) (Rattus norvegicus (Rat)).